The following is a 240-amino-acid chain: NADH-quinone oxidoreductase subunit C (240 aa).

The interval 1–82 is disordered; that stretch reads MSEEEKPKPK…PVDENRDPEP (82 aa). A compositionally biased stretch (low complexity) spans 11–20; that stretch reads LSPALAAKMA. Over residues 67 to 82 the composition is skewed to basic and acidic residues; the sequence is DKPKAEPVDENRDPEP.

This sequence belongs to the complex I 30 kDa subunit family. In terms of assembly, NDH-1 is composed of 14 different subunits. Subunits NuoB, C, D, E, F, and G constitute the peripheral sector of the complex.

Its subcellular location is the cell inner membrane. The catalysed reaction is a quinone + NADH + 5 H(+)(in) = a quinol + NAD(+) + 4 H(+)(out). In terms of biological role, NDH-1 shuttles electrons from NADH, via FMN and iron-sulfur (Fe-S) centers, to quinones in the respiratory chain. The immediate electron acceptor for the enzyme in this species is believed to be a menaquinone. Couples the redox reaction to proton translocation (for every two electrons transferred, four hydrogen ions are translocated across the cytoplasmic membrane), and thus conserves the redox energy in a proton gradient. This chain is NADH-quinone oxidoreductase subunit C, found in Chloroherpeton thalassium (strain ATCC 35110 / GB-78).